A 512-amino-acid polypeptide reads, in one-letter code: Extracellular serine/threonine protein kinase CeFam20 (512 aa).

Residues 1–6 (MRCNIK) are Cytoplasmic-facing. The helical; Signal-anchor for type II membrane protein transmembrane segment at 7–26 (RLFTLAIGVFAATLVIISFS) threads the bilayer. The Lumenal portion of the chain corresponds to 27-512 (KDNYEREWKQ…QDKKDDKKTV (486 aa)). Cysteine 110 and cysteine 144 are joined by a disulfide. An N-linked (GlcNAc...) asparagine glycan is attached at asparagine 113. ATP-binding residues include glutamine 176, lysine 192, and glutamate 213. Glutamate 213 is a Mn(2+) binding site. Asparagine 242 carries an N-linked (GlcNAc...) asparagine glycan. Cystine bridges form between cysteine 268/cysteine 284 and cysteine 273/cysteine 277. Residue 295 to 298 (QVFL) coordinates ATP. Disulfide bonds link cysteine 333-cysteine 409 and cysteine 410-cysteine 469. The active site involves aspartate 366. Glutamate 371 and aspartate 387 together coordinate ATP. Aspartate 387 is a binding site for Mn(2+). The disordered stretch occupies residues 486–512 (PDVSDAEQNDEEQSEEHQDKKDDKKTV). Residues 489–499 (SDAEQNDEEQS) show a composition bias toward acidic residues. A compositionally biased stretch (basic and acidic residues) spans 500–512 (EEHQDKKDDKKTV).

The protein belongs to the FAM20 family. It depends on Mn(2+) as a cofactor.

Its subcellular location is the golgi apparatus membrane. The protein localises to the secreted. It carries out the reaction L-seryl-[protein] + ATP = O-phospho-L-seryl-[protein] + ADP + H(+). The catalysed reaction is L-threonyl-[protein] + ATP = O-phospho-L-threonyl-[protein] + ADP + H(+). In terms of biological role, golgi serine/threonine protein kinase that phosphorylates secretory pathway proteins within Ser-x-Glu/pSer motifs. In Caenorhabditis elegans, this protein is Extracellular serine/threonine protein kinase CeFam20.